Consider the following 89-residue polypeptide: Putative membrane protein insertion efficiency factor (89 aa).

The tract at residues V68–L89 is disordered. Residues N77–L89 are compositionally biased toward basic and acidic residues.

This sequence belongs to the UPF0161 family.

It is found in the cell inner membrane. Could be involved in insertion of integral membrane proteins into the membrane. In Burkholderia thailandensis (strain ATCC 700388 / DSM 13276 / CCUG 48851 / CIP 106301 / E264), this protein is Putative membrane protein insertion efficiency factor.